A 158-amino-acid chain; its full sequence is Methylated-DNA--protein-cysteine methyltransferase (158 aa).

Residue C126 is the Nucleophile; methyl group acceptor of the active site.

Belongs to the MGMT family.

The protein localises to the cytoplasm. It carries out the reaction a 6-O-methyl-2'-deoxyguanosine in DNA + L-cysteinyl-[protein] = S-methyl-L-cysteinyl-[protein] + a 2'-deoxyguanosine in DNA. The enzyme catalyses a 4-O-methyl-thymidine in DNA + L-cysteinyl-[protein] = a thymidine in DNA + S-methyl-L-cysteinyl-[protein]. Its function is as follows. Involved in the cellular defense against the biological effects of O6-methylguanine (O6-MeG) and O4-methylthymine (O4-MeT) in DNA. Repairs the methylated nucleobase in DNA by stoichiometrically transferring the methyl group to a cysteine residue in the enzyme. This is a suicide reaction: the enzyme is irreversibly inactivated. The protein is Methylated-DNA--protein-cysteine methyltransferase of Methanosarcina barkeri (strain Fusaro / DSM 804).